We begin with the raw amino-acid sequence, 146 residues long: HTH-type transcriptional regulator FarR (146 aa).

The 133-residue stretch at 7 to 139 (HASINIGLIQ…LKDLLAELAK (133 aa)) folds into the HTH marR-type domain. The H-T-H motif DNA-binding region spans 53–76 (FQDLANQACILRPSLTGILTRLEK).

With respect to regulation, repressor activity requires the presence of the Integration Host Factor (IHF), which binds to sequences located between FarR binding sites A and C. IHF binding to the promoter region stabilizes the binding of FarR to its binding sites A and C and as a consequence, enhances repression of the farAB operon. Its function is as follows. Negatively controls expression of the farAB operon by binding directly to the farAB promoter region. Binds to three sites (sites A, B and C) within the DNA sequence upstream of farA. Also represses its own expression. The protein is HTH-type transcriptional regulator FarR of Neisseria gonorrhoeae.